The chain runs to 92 residues: Small ribosomal subunit protein uS19 (92 aa).

Belongs to the universal ribosomal protein uS19 family.

Functionally, protein S19 forms a complex with S13 that binds strongly to the 16S ribosomal RNA. In Staphylococcus carnosus (strain TM300), this protein is Small ribosomal subunit protein uS19.